A 141-amino-acid chain; its full sequence is Large ribosomal subunit protein uL11 (141 aa).

Belongs to the universal ribosomal protein uL11 family. As to quaternary structure, part of the ribosomal stalk of the 50S ribosomal subunit. Interacts with L10 and the large rRNA to form the base of the stalk. L10 forms an elongated spine to which L12 dimers bind in a sequential fashion forming a multimeric L10(L12)X complex. Post-translationally, one or more lysine residues are methylated.

Functionally, forms part of the ribosomal stalk which helps the ribosome interact with GTP-bound translation factors. The polypeptide is Large ribosomal subunit protein uL11 (Petrotoga mobilis (strain DSM 10674 / SJ95)).